The chain runs to 945 residues: Leucine--tRNA ligase 1 (945 aa).

Positions 42–52 (PYTNSPLHIGH) match the 'HIGH' region motif. The short motif at 625–629 (KMSKS) is the 'KMSKS' region element. Lys628 provides a ligand contact to ATP.

It belongs to the class-I aminoacyl-tRNA synthetase family.

The protein localises to the cytoplasm. It catalyses the reaction tRNA(Leu) + L-leucine + ATP = L-leucyl-tRNA(Leu) + AMP + diphosphate. The sequence is that of Leucine--tRNA ligase 1 from Sulfurisphaera tokodaii (strain DSM 16993 / JCM 10545 / NBRC 100140 / 7) (Sulfolobus tokodaii).